Consider the following 500-residue polypeptide: Taxoid 7-beta-hydroxylase (500 aa).

A helical membrane pass occupies residues Pro24–Thr44. Cys446 lines the heme pocket.

This sequence belongs to the cytochrome P450 family.

It localises to the microsome membrane. It carries out the reaction taxusin + reduced [NADPH--hemoprotein reductase] + O2 = 7beta-hydroxytaxusin + oxidized [NADPH--hemoprotein reductase] + H2O + H(+). The enzyme catalyses 2alpha-hydroxytaxusin + reduced [NADPH--hemoprotein reductase] + O2 = 2alpha,7beta-dihydroxytaxusin + oxidized [NADPH--hemoprotein reductase] + H2O + H(+). It catalyses the reaction 7beta-hydroxytaxusin + reduced [NADPH--hemoprotein reductase] + O2 = 2alpha,7beta-dihydroxytaxusin + oxidized [NADPH--hemoprotein reductase] + H2O + H(+). Its pathway is alkaloid biosynthesis; taxol biosynthesis. In terms of biological role, catalyzes the conversion of taxusin to 7-beta-hydroxytaxusin in taxol biosynthesis. Catalyzes the conversion of 2-alpha-hydroxytaxusin to 2-alpha-7-beta-hydroxytaxusin in taxol biosynthesis. The sequence is that of Taxoid 7-beta-hydroxylase from Taxus cuspidata (Japanese yew).